We begin with the raw amino-acid sequence, 173 residues long: Large ribosomal subunit protein uL10 (173 aa).

Belongs to the universal ribosomal protein uL10 family. Part of the ribosomal stalk of the 50S ribosomal subunit. The N-terminus interacts with L11 and the large rRNA to form the base of the stalk. The C-terminus forms an elongated spine to which L12 dimers bind in a sequential fashion forming a multimeric L10(L12)X complex.

Functionally, forms part of the ribosomal stalk, playing a central role in the interaction of the ribosome with GTP-bound translation factors. This chain is Large ribosomal subunit protein uL10, found in Bifidobacterium longum (strain DJO10A).